The sequence spans 242 residues: Uridylate kinase (242 aa).

Residue 15–18 (KLSG) coordinates ATP. Gly57 is a UMP binding site. Gly58 and Arg62 together coordinate ATP. UMP-binding positions include Asp78 and 139–146 (TGNPFFTT). The ATP site is built by Thr166, Tyr172, and Asp175.

Belongs to the UMP kinase family. As to quaternary structure, homohexamer.

It is found in the cytoplasm. The enzyme catalyses UMP + ATP = UDP + ADP. The protein operates within pyrimidine metabolism; CTP biosynthesis via de novo pathway; UDP from UMP (UMPK route): step 1/1. Its activity is regulated as follows. Inhibited by UTP. Functionally, catalyzes the reversible phosphorylation of UMP to UDP. The protein is Uridylate kinase of Acinetobacter baumannii (strain ATCC 17978 / DSM 105126 / CIP 53.77 / LMG 1025 / NCDC KC755 / 5377).